Here is a 185-residue protein sequence, read N- to C-terminus: Thymidine kinase (185 aa).

17–24 is an ATP binding site; it reads GPMFAGKT. E92 serves as the catalytic Proton acceptor. F121 is a substrate binding site. Residues C146 and C149 each contribute to the Zn(2+) site. 166 to 170 lines the substrate pocket; it reads LILAG. C179 and C182 together coordinate Zn(2+).

It belongs to the thymidine kinase family.

The enzyme catalyses thymidine + ATP = dTMP + ADP + H(+). Phosphorylates thymidine. ASFV replicates in the cytoplasm of infected cells and contains genes encoding a number of enzymes needed for DNA synthesis, including thymidine kinase. Important for growth in swine macrophages in vitro and is a virus virulence factor in swine. The sequence is that of Thymidine kinase from African swine fever virus (isolate Pig/Kenya/KEN-50/1950) (ASFV).